The sequence spans 161 residues: Probable cell wall elongation regulator TseB (161 aa).

The Cytoplasmic segment spans residues 1–5; that stretch reads MRKKA. Residues 6–26 form a helical membrane-spanning segment; the sequence is LIFTVIFGIIFLAVLLVSASI. Residues 27–161 lie on the Extracellular side of the membrane; it reads YKSAMAQKEE…TGKILKNITP (135 aa).

In terms of assembly, interacts with the penicillin-binding protein PBP2A, a monofunctional transpeptidase.

Its subcellular location is the cell membrane. In terms of biological role, required for normal cell shape. Plays an important role in cell wall elongation during exponential phase and spore outgrowth. Probably regulates the activity of the penicillin-binding protein PBP2A through a direct interaction. Not required for PBP2A activity, stability and localization. The sequence is that of Probable cell wall elongation regulator TseB from Bacillus subtilis (strain 168).